A 589-amino-acid chain; its full sequence is MTRTTRIDTQEATKHKDLPPVPSPLSLSSNPNPECLMESKSLGRKNFKKLSLDASPVKSTSGSLRSSDMMSIKEPTSLRQKRQRPPPILHLPTASSSATSTPTSNITGSSSASSIQFAQKSPGSGVIVSQTLSRPSSAGGIPSSGYSSLNVNQSNRNVDPDNVVSTDMILNQISNLDLTSMNHHRQHYQNSHHHLPTTNRKRQTVISSISPTKSSAASSPLEPQIQSLPASSQSPIATTSALKLNNKDLLTLKQLGSGNSGSVSKILHIPTQKTMAKKIIHIDSKSVIQTQIIRELRILHECHSPYIIEFYGACLNNNNTIVICMEYCNCGSLDKILPLCENKQFPTFVLKKLSFAILSGLTYLYTTHKIIHRDIKPNNVLMTHKGEFKLCDFGVSRELTNSLAMADTFVGTSMYMSPERIQGLDYGVKSDVWSTGLMLIELASGVPVWSEDDNNNDDDEDDEDDAYVRQGSIAAERNGQNSPSRSRKNKQKGNGYNSYNGPEGILDLLQRIVNEDAPTLTNKINPVTKLPYDKYLCQFIDLCLIKDDSVRKTPWQLLEDKEHFFKGVEEGVYDKEHKSWAKKIRKCKV.

Basic and acidic residues predominate over residues 1–18 (MTRTTRIDTQEATKHKDL). Disordered stretches follow at residues 1–162 (MTRT…DPDN) and 185–232 (RQHY…PASS). The span at 24–33 (PLSLSSNPNP) shows a compositional bias: low complexity. A compositionally biased stretch (polar residues) spans 57–69 (VKSTSGSLRSSDM). The segment covering 92–121 (PTASSSATSTPTSNITGSSSASSIQFAQKS) has biased composition (low complexity). Composition is skewed to polar residues over residues 127 to 136 (IVSQTLSRPS) and 144 to 162 (SGYS…DPDN). The span at 185–203 (RQHYQNSHHHLPTTNRKRQ) shows a compositional bias: basic residues. Low complexity predominate over residues 206–220 (ISSISPTKSSAASSP). The region spanning 249–565 (LLTLKQLGSG…QLLEDKEHFF (317 aa)) is the Protein kinase domain. Residues 255–263 (LGSGNSGSV) and lysine 278 contribute to the ATP site. Aspartate 374 functions as the Proton acceptor in the catalytic mechanism. Phosphoserine is present on serine 402. Phosphothreonine is present on threonine 408. The segment at 473–499 (IAAERNGQNSPSRSRKNKQKGNGYNSY) is disordered.

It belongs to the protein kinase superfamily. STE Ser/Thr protein kinase family. MAP kinase kinase subfamily.

It carries out the reaction L-seryl-[protein] + ATP = O-phospho-L-seryl-[protein] + ADP + H(+). The catalysed reaction is L-threonyl-[protein] + ATP = O-phospho-L-threonyl-[protein] + ADP + H(+). The enzyme catalyses L-tyrosyl-[protein] + ATP = O-phospho-L-tyrosyl-[protein] + ADP + H(+). This chain is Serine/threonine-protein kinase STE7 homolog (HST7), found in Candida albicans (strain WO-1) (Yeast).